The sequence spans 262 residues: Acetylglutamate kinase (262 aa).

Substrate contacts are provided by residues Gly46–Gly47, Arg68, and Asn160.

This sequence belongs to the acetylglutamate kinase family. ArgB subfamily.

Its subcellular location is the cytoplasm. The catalysed reaction is N-acetyl-L-glutamate + ATP = N-acetyl-L-glutamyl 5-phosphate + ADP. Its pathway is amino-acid biosynthesis; L-arginine biosynthesis; N(2)-acetyl-L-ornithine from L-glutamate: step 2/4. Functionally, catalyzes the ATP-dependent phosphorylation of N-acetyl-L-glutamate. The sequence is that of Acetylglutamate kinase from Shewanella amazonensis (strain ATCC BAA-1098 / SB2B).